Here is a 500-residue protein sequence, read N- to C-terminus: Lysine--tRNA ligase (500 aa).

The Mg(2+) site is built by glutamate 410 and glutamate 417.

This sequence belongs to the class-II aminoacyl-tRNA synthetase family. Homodimer. Requires Mg(2+) as cofactor.

It localises to the cytoplasm. The enzyme catalyses tRNA(Lys) + L-lysine + ATP = L-lysyl-tRNA(Lys) + AMP + diphosphate. This Mycoplasma capricolum subsp. capricolum (strain California kid / ATCC 27343 / NCTC 10154) protein is Lysine--tRNA ligase.